The following is a 115-amino-acid chain: uncharacterized protein (115 aa).

It belongs to the transposase 34 family.

This is an uncharacterized protein from Sinorhizobium fredii (strain NBRC 101917 / NGR234).